Consider the following 471-residue polypeptide: UDP-N-acetylmuramoylalanine--D-glutamate ligase (471 aa).

An ATP-binding site is contributed by 120 to 126 (GSNGKTT).

Belongs to the MurCDEF family.

It is found in the cytoplasm. It catalyses the reaction UDP-N-acetyl-alpha-D-muramoyl-L-alanine + D-glutamate + ATP = UDP-N-acetyl-alpha-D-muramoyl-L-alanyl-D-glutamate + ADP + phosphate + H(+). Its pathway is cell wall biogenesis; peptidoglycan biosynthesis. Cell wall formation. Catalyzes the addition of glutamate to the nucleotide precursor UDP-N-acetylmuramoyl-L-alanine (UMA). The protein is UDP-N-acetylmuramoylalanine--D-glutamate ligase of Nitrosomonas europaea (strain ATCC 19718 / CIP 103999 / KCTC 2705 / NBRC 14298).